The primary structure comprises 442 residues: MTQIAIQPAIRRRHQPWYKILYVQVLIAIVLGVLIGYFYPDFGKELKPLGDGFIALIKMMIAPVIFCTVVHGISSMGDLKRVGRVGLKSLIYFESVSTVALAVGLLVGEVLQPGHGFNIDPATIDPKSVATYVTKAKEEGIVAHLMAIIPDSYVGAIARGDLLQVLLISILSGFAIAFLGKAGEPIADAIDKAAKMFFGIIRIIVRVAPVGAFGAMAFTVGAYGLGSLLNLAALIGTFYLTSILFVLIVLGAIARLAGFSILRFIAYIKDELLIVLGTSSSETVLPQMIQKMEHLGASRSVVGLVIPTGYSFNLDGTNIYMTLATLFLAQATNTHLTIWQELGILGIAMITSKGASGVTGAGFITLAATLSIVPDIPIQSIAILVGIDKFMSECRALTNLIGNGVACVVISISEGELDRDALHETMAHPLEIGEALEPGGGA.

6 helical membrane passes run Ile-20–Pro-40, Phe-53–Ile-73, Leu-90–Val-110, Gly-160–Gly-180, Pro-209–Leu-229, and Ala-233–Ile-253.

It belongs to the dicarboxylate/amino acid:cation symporter (DAACS) (TC 2.A.23) family.

Its subcellular location is the cell inner membrane. Responsible for the transport of dicarboxylates such as succinate, fumarate, and malate from the periplasm across the membrane. The sequence is that of C4-dicarboxylate transport protein 4 from Bradyrhizobium diazoefficiens (strain JCM 10833 / BCRC 13528 / IAM 13628 / NBRC 14792 / USDA 110).